We begin with the raw amino-acid sequence, 207 residues long: uncharacterized protein (207 aa).

A helical transmembrane segment spans residues 177-197; the sequence is LILAIGFIIGILLPTFFILLG.

It localises to the membrane. This is an uncharacterized protein from Haemophilus influenzae (strain ATCC 51907 / DSM 11121 / KW20 / Rd).